Consider the following 466-residue polypeptide: Asparagine--tRNA ligase (466 aa).

Belongs to the class-II aminoacyl-tRNA synthetase family. Homodimer.

It localises to the cytoplasm. It catalyses the reaction tRNA(Asn) + L-asparagine + ATP = L-asparaginyl-tRNA(Asn) + AMP + diphosphate + H(+). In Shewanella denitrificans (strain OS217 / ATCC BAA-1090 / DSM 15013), this protein is Asparagine--tRNA ligase.